Here is a 731-residue protein sequence, read N- to C-terminus: Small conductance calcium-activated potassium channel protein 3 (731 aa).

Residues 1–11 (MDTSGHFHDSG) are compositionally biased toward basic and acidic residues. Disordered stretches follow at residues 1–170 (MDTS…SNPF) and 239–258 (ATHNHQHAGTTASSTTFPKA). A compositionally biased stretch (low complexity) spans 30–40 (QQQQQQQQQQQ). Residues 41 to 51 (QPPPPAPPAAP) show a composition bias toward pro residues. The span at 52–95 (QQPLGPSLQPQPPQLQQQQQQQQQQQQQQPPHPLSQLAQLQSQP) shows a compositional bias: low complexity. Residues 112–132 (PSSNSTAILHPSSRQGSQLNL) show a composition bias toward polar residues. Residues 138–147 (GHSPSSTATS) are compositionally biased toward low complexity. S167 is modified (phosphoserine). Positions 239 to 256 (ATHNHQHAGTTASSTTFP) are enriched in polar residues. Residues 288–308 (LIFGMFGIVVMVIETELSWGL) form a helical membrane-spanning segment. The helical transmembrane segment at 315 to 335 (FSLALKCLISLSTIILLGLII) threads the bilayer. The helical transmembrane segment at 366-386 (ISLEMLVCAIHPIPGEYKFFW) threads the bilayer. A helical membrane pass occupies residues 405–425 (IILSIPMFLRLYLIARVMLLH). Residues 454 to 474 (LMTICPGTVLLVFSISLWIIA) traverse the membrane as a helical segment. The segment at residues 494-514 (FLGAMWLISITFLSIGYGDMV) is an intramembrane region (pore-forming). The chain crosses the membrane as a helical span at residues 523–543 (VCLLTGIMGAGCTALVVAVVA). Residues 561–637 (DTQLTKRIKN…LVDLSKMQNV (77 aa)) form a calmodulin-binding region. A coiled-coil region spans residues 642–669 (ITELNDRSEDLEKQIGSLESKLEHLTAS). The tract at residues 709-731 (ISDSPIGVSSTSFPTPYTSSSSC) is disordered. Positions 717-731 (SSTSFPTPYTSSSSC) are enriched in low complexity.

It belongs to the potassium channel KCNN family. KCa2.3/KCNN3 subfamily. Homodimer. Heteromultimer with KCNN2 or KCNN1; this modulates plasma membrane expression and consequently the small conductance calcium-activated potassium channel activity. The complex is composed of 4 channel subunits each of which binds to a calmodulin subunit which regulates the channel activity through calcium-binding. Interacts with CALM1. As to expression, widely distributed in human tissues and is present at 20-60% of KCNN3 in the brain.

It localises to the cell membrane. The protein localises to the cytoplasm. It is found in the myofibril. Its subcellular location is the sarcomere. The protein resides in the z line. The catalysed reaction is K(+)(in) = K(+)(out). Inhibited by bee venom neurotoxin apamin. Functionally, small conductance calcium-activated potassium channel that mediates the voltage-independent transmembrane transfer of potassium across the cell membrane through a constitutive interaction with calmodulin which binds the intracellular calcium allowing its opening. The current is characterized by a voltage-independent activation, an intracellular calcium concentration increase-dependent activation and a single-channel conductance of 10 picosiemens. Also presents an inwardly rectifying current, thus reducing its already small outward conductance of potassium ions, which is particularly the case when the membrane potential displays positive values, above + 20 mV. Activation is followed by membrane hyperpolarization. Thought to regulate neuronal excitability by contributing to the slow component of synaptic afterhyperpolarization. Its function is as follows. Does not function as a small conductance calcium-activated potassium channel. Selectively suppresses endogenous KCNN3 currents, in a dominant-negative fashion by decreasing the abundance of functional channels in the plasma membrane, possibly by selectively coassembling with and sequestering native KCNN3 protein in intracellular compartments. This dominant inhibitory effect extends to other members of the SK subfamily. In Homo sapiens (Human), this protein is Small conductance calcium-activated potassium channel protein 3.